The sequence spans 566 residues: Erythroid membrane-associated protein (566 aa).

A signal peptide spans 1–29 (MERPSPCGSWLVGCLFTIAVFQPPVQVLG). The region spanning 30–139 (DAGKVYIAPL…SSREDNVTLQ (110 aa)) is the Ig-like V-type domain. The Extracellular segment spans residues 30–246 (DAGKVYIAPL…PERGSLSSPA (217 aa)). Cysteines 47 and 123 form a disulfide. 2 N-linked (GlcNAc...) asparagine glycosylation sites follow: N135 and N214. The helical transmembrane segment at 247–267 (VALSVVLPVLGLLILLGIWLI) threads the bilayer. Residues 268 to 566 (CKQKKSKEKL…ALKGLKVPSL (299 aa)) are Cytoplasmic-facing. One can recognise a B30.2/SPRY domain in the interval 311-509 (KLKRAAANAG…LIICTELQKS (199 aa)). S509 bears the Phosphoserine mark.

The protein belongs to the immunoglobulin superfamily. BTN/MOG family. Glycosylated. Expressed in spleen and bone marrow.

The protein localises to the cell membrane. It localises to the cytoplasm. Its function is as follows. Possible role as a cell-adhesion or receptor molecule of erythroid cells. The protein is Erythroid membrane-associated protein (Ermap) of Mus musculus (Mouse).